The sequence spans 621 residues: tRNA uridine 5-carboxymethylaminomethyl modification enzyme MnmG (621 aa).

FAD is bound at residue 8-13 (GAGHAG). Position 269-283 (269-283 (GPRYCPSVEDKIFRF)) interacts with NAD(+).

This sequence belongs to the MnmG family. Homodimer. Heterotetramer of two MnmE and two MnmG subunits. FAD serves as cofactor.

Its subcellular location is the cytoplasm. Functionally, NAD-binding protein involved in the addition of a carboxymethylaminomethyl (cmnm) group at the wobble position (U34) of certain tRNAs, forming tRNA-cmnm(5)s(2)U34. This chain is tRNA uridine 5-carboxymethylaminomethyl modification enzyme MnmG, found in Chlorobium phaeobacteroides (strain DSM 266 / SMG 266 / 2430).